The sequence spans 83 residues: Small ribosomal subunit protein eS21 (83 aa).

The protein belongs to the eukaryotic ribosomal protein eS21 family. As to quaternary structure, component of the 40S small ribosomal subunit.

The protein resides in the cytoplasm. It localises to the cytosol. Its subcellular location is the rough endoplasmic reticulum. Its function is as follows. Component of the small ribosomal subunit. The ribosome is a large ribonucleoprotein complex responsible for the synthesis of proteins in the cell. This is Small ribosomal subunit protein eS21 (rps21) from Xenopus tropicalis (Western clawed frog).